Consider the following 255-residue polypeptide: Octanoyltransferase (255 aa).

Positions 1–21 are disordered; the sequence is MCATPVSPSPESPRSAQAGAA. The BPL/LPL catalytic domain occupies 56–242; that stretch reads FETSDEIWLV…SLIANIDGIP (187 aa). Residues 96–103, 173–175, and 186–188 each bind substrate; these read RGGQITYH, ALG, and GVS. C204 functions as the Acyl-thioester intermediate in the catalytic mechanism.

The protein belongs to the LipB family.

Its subcellular location is the cytoplasm. The catalysed reaction is octanoyl-[ACP] + L-lysyl-[protein] = N(6)-octanoyl-L-lysyl-[protein] + holo-[ACP] + H(+). Its pathway is protein modification; protein lipoylation via endogenous pathway; protein N(6)-(lipoyl)lysine from octanoyl-[acyl-carrier-protein]: step 1/2. Catalyzes the transfer of endogenously produced octanoic acid from octanoyl-acyl-carrier-protein onto the lipoyl domains of lipoate-dependent enzymes. Lipoyl-ACP can also act as a substrate although octanoyl-ACP is likely to be the physiological substrate. This is Octanoyltransferase from Paraburkholderia phymatum (strain DSM 17167 / CIP 108236 / LMG 21445 / STM815) (Burkholderia phymatum).